Here is a 390-residue protein sequence, read N- to C-terminus: 8-amino-7-oxononanoate synthase (390 aa).

Substrate is bound at residue arginine 22. 109-110 (GY) lines the pyridoxal 5'-phosphate pocket. Histidine 134 lines the substrate pocket. The pyridoxal 5'-phosphate site is built by serine 180, histidine 208, and threonine 236. Lysine 239 carries the N6-(pyridoxal phosphate)lysine modification. Threonine 353 is a binding site for substrate.

Belongs to the class-II pyridoxal-phosphate-dependent aminotransferase family. BioF subfamily. As to quaternary structure, homodimer. Requires pyridoxal 5'-phosphate as cofactor.

The catalysed reaction is 6-carboxyhexanoyl-[ACP] + L-alanine + H(+) = (8S)-8-amino-7-oxononanoate + holo-[ACP] + CO2. Its pathway is cofactor biosynthesis; biotin biosynthesis. Functionally, catalyzes the decarboxylative condensation of pimeloyl-[acyl-carrier protein] and L-alanine to produce 8-amino-7-oxononanoate (AON), [acyl-carrier protein], and carbon dioxide. This Azoarcus sp. (strain BH72) protein is 8-amino-7-oxononanoate synthase.